The following is a 169-amino-acid chain: Chorismate pyruvate-lyase (169 aa).

Positions 35, 77, 115, and 156 each coordinate substrate.

It belongs to the UbiC family. In terms of assembly, monomer.

It localises to the cytoplasm. It catalyses the reaction chorismate = 4-hydroxybenzoate + pyruvate. The protein operates within cofactor biosynthesis; ubiquinone biosynthesis. Removes the pyruvyl group from chorismate, with concomitant aromatization of the ring, to provide 4-hydroxybenzoate (4HB) for the ubiquinone pathway. The chain is Chorismate pyruvate-lyase from Cronobacter sakazakii (strain ATCC BAA-894) (Enterobacter sakazakii).